Here is a 142-residue protein sequence, read N- to C-terminus: Hemoglobin subunit alpha-A (142 aa).

In terms of domain architecture, Globin spans Val2–Arg142. Position 59 (His59) interacts with O2. Position 88 (His88) interacts with heme b.

It belongs to the globin family. Heterotetramer of two alpha chains and two beta chains. As to expression, red blood cells.

Functionally, involved in oxygen transport from the lung to the various peripheral tissues. The chain is Hemoglobin subunit alpha-A (HBAA) from Accipiter gentilis (Northern goshawk).